Reading from the N-terminus, the 539-residue chain is CTP synthase (539 aa).

Positions 1-267 (MTKYIFVTGG…DQKVCDFLHI (267 aa)) are amidoligase domain. Ser13 lines the CTP pocket. Ser13 contacts UTP. 14–19 (SLGKGI) is a binding site for ATP. Tyr54 lines the L-glutamine pocket. Asp71 is an ATP binding site. Residues Asp71 and Glu141 each coordinate Mg(2+). CTP-binding positions include 148–150 (DME), 188–193 (KTKPTQ), and Lys224. UTP is bound by residues 188–193 (KTKPTQ) and Lys224. The 244-residue stretch at 294 to 537 (KITLVGKYVE…IGAASGLPEQ (244 aa)) folds into the Glutamine amidotransferase type-1 domain. Gly356 contributes to the L-glutamine binding site. Cys383 (nucleophile; for glutamine hydrolysis) is an active-site residue. Residues 384-387 (LGMQ), Glu407, and Arg465 contribute to the L-glutamine site. Catalysis depends on residues His510 and Glu512.

The protein belongs to the CTP synthase family. In terms of assembly, homotetramer.

It carries out the reaction UTP + L-glutamine + ATP + H2O = CTP + L-glutamate + ADP + phosphate + 2 H(+). The enzyme catalyses L-glutamine + H2O = L-glutamate + NH4(+). It catalyses the reaction UTP + NH4(+) + ATP = CTP + ADP + phosphate + 2 H(+). The protein operates within pyrimidine metabolism; CTP biosynthesis via de novo pathway; CTP from UDP: step 2/2. Its activity is regulated as follows. Allosterically activated by GTP, when glutamine is the substrate; GTP has no effect on the reaction when ammonia is the substrate. The allosteric effector GTP functions by stabilizing the protein conformation that binds the tetrahedral intermediate(s) formed during glutamine hydrolysis. Inhibited by the product CTP, via allosteric rather than competitive inhibition. Functionally, catalyzes the ATP-dependent amination of UTP to CTP with either L-glutamine or ammonia as the source of nitrogen. Regulates intracellular CTP levels through interactions with the four ribonucleotide triphosphates. The chain is CTP synthase from Lactobacillus helveticus (strain DPC 4571).